The chain runs to 125 residues: U11-myrmicitoxin-Ta1a (125 aa).

An N-terminal signal peptide occupies residues 1–21; it reads MKTVIFILGFAFVAILIPTNG. Residues 22–91 constitute a propeptide that is removed on maturation; it reads ESMADADAMA…RAMAAAYAAA (70 aa). An intrachain disulfide couples cysteine 101 to cysteine 124.

The protein belongs to the formicidae venom precursor-01 superfamily. As to expression, expressed by the venom gland.

It is found in the secreted. It localises to the target cell membrane. Functionally, neurotoxin that causes irreversible rapid flaccid paralysis in blowflies and honeybees upon intrathoracic injection. Causes a quick and irreversible cytolytic effect (at 10 uM) indicating it possibly acts as a pore-forming peptide. Shows only weak effect on aphids (A.pisum) at high doses 24 hours post intrathoracic injection. In vitro, is not cytotoxic on the dipteran S2 Drosophila embryonic cell line. The chain is U11-myrmicitoxin-Ta1a from Tetramorium africanum (Fierce ant).